The following is a 107-amino-acid chain: U1-lycotoxin-Ls1e (107 aa).

Residues 1–20 form the signal peptide; that stretch reads MMKVLVVFALLVTLISYSSS. Positions 21 to 41 are excised as a propeptide; it reads EGIDDLEADELLSLMANEQTR. Cystine bridges form between Cys44-Cys59, Cys51-Cys68, Cys58-Cys86, and Cys70-Cys84.

The protein belongs to the neurotoxin 19 (CSTX) family. 04 (U1-Lctx) subfamily. Expressed by the venom gland.

The protein localises to the secreted. The chain is U1-lycotoxin-Ls1e from Lycosa singoriensis (Wolf spider).